Consider the following 263-residue polypeptide: Achaete-scute homolog 2 (263 aa).

Disordered regions lie at residues 104-126 and 194-248; these read RRRR…RNER and PPSD…ELSP. Low complexity-rich tracts occupy residues 110 to 121, 202 to 220, and 230 to 247; these read ATEASSSSAAVA, PSAS…SPSP, and SPRS…GELS. The bHLH domain occupies 118–170; it reads AAVARRNERERNRVKLVNLGFQALRQHVPHGGANKKLSKVETLRSAVEYIRAL.

As to quaternary structure, efficient DNA binding requires dimerization with another basic helix-loop-helix (bHLH) protein. Forms heterodimers with bHLH transcription factor TCF3. May not heterodimerise with bHLH protein HAND1. Expressed in follicular T-helper (Tfh) cells.

The protein resides in the nucleus. Transcription factor. Binds to E-box motifs 5'-CANNTG-3' in the regulatory elements of target genes, probably as a heterodimer with another basic helix-loop-helix (bHLH) protein such as the transcription factor TCF3. May bind both open and closed chromatin, acting as a pioneer transcription factor to allow other factors to bind and activate lineage-specific genes. Required during post-implantation development for the generation of some differentiated trophoblast cell types. Transcriptional activity of ASCL2 may be antagonised in a subset of trophoblast cells by bHLH transcription factor HAND1, perhaps by competing for dimerization with other bHLH proteins. Involved in differentiation and function of follicular T-helper (Tfh) cells, thereby playing a role in germinal center responses; probably modulates expression of genes involved in Tfh cell function, such as BCL6. May also act as a suppressor of Th1-, Th2- and Th17-cell differentiation. Induces the formation of stem cells in intestinal crypts in vitro, synergistically activating transcription of target genes, such as SOX9, together with TCF4/beta-catenin. May form a bistable transcriptional switch, controlling expression of its own gene together with Wnt/R-spondin signaling, and thereby maintaining stem cell characteristics. Modulates expression of target genes, including perhaps down-regulating EGR1/Krox24 and chemokine CXCL10/Mob-1 and up-regulating CXCR4 and CDKN1C/p57kip2, in Schwann cells. May play a role in reducing proliferation of Schwann cells, perhaps acting via modulation of expression of CDKN1C. May be dispensable for blastocyst formation and later embryonic function. May be involved in the determination of neuronal precursors. This is Achaete-scute homolog 2 (Ascl2) from Mus musculus (Mouse).